Consider the following 254-residue polypeptide: 5-oxoprolinase subunit A (254 aa).

The protein belongs to the LamB/PxpA family. Forms a complex composed of PxpA, PxpB and PxpC.

The catalysed reaction is 5-oxo-L-proline + ATP + 2 H2O = L-glutamate + ADP + phosphate + H(+). Functionally, catalyzes the cleavage of 5-oxoproline to form L-glutamate coupled to the hydrolysis of ATP to ADP and inorganic phosphate. This chain is 5-oxoprolinase subunit A, found in Brevibacillus brevis (strain 47 / JCM 6285 / NBRC 100599).